Consider the following 185-residue polypeptide: ATP-dependent protease subunit HslV (185 aa).

The active site involves threonine 2. The Na(+) site is built by glycine 157, cysteine 160, and threonine 163.

Belongs to the peptidase T1B family. HslV subfamily. As to quaternary structure, a double ring-shaped homohexamer of HslV is capped on each side by a ring-shaped HslU homohexamer. The assembly of the HslU/HslV complex is dependent on binding of ATP.

The protein localises to the cytoplasm. The catalysed reaction is ATP-dependent cleavage of peptide bonds with broad specificity.. Allosterically activated by HslU binding. In terms of biological role, protease subunit of a proteasome-like degradation complex believed to be a general protein degrading machinery. This chain is ATP-dependent protease subunit HslV, found in Vibrio cholerae serotype O1 (strain ATCC 39315 / El Tor Inaba N16961).